The chain runs to 183 residues: Hypoxanthine/guanine phosphoribosyltransferase (183 aa).

It belongs to the purine/pyrimidine phosphoribosyltransferase family. Archaeal HPRT subfamily. Homodimer.

Its subcellular location is the cytoplasm. The catalysed reaction is IMP + diphosphate = hypoxanthine + 5-phospho-alpha-D-ribose 1-diphosphate. It carries out the reaction GMP + diphosphate = guanine + 5-phospho-alpha-D-ribose 1-diphosphate. It participates in purine metabolism; IMP biosynthesis via salvage pathway; IMP from hypoxanthine: step 1/1. Its function is as follows. Catalyzes a salvage reaction resulting in the formation of IMP that is energically less costly than de novo synthesis. The chain is Hypoxanthine/guanine phosphoribosyltransferase from Methanocaldococcus vulcanius (strain ATCC 700851 / DSM 12094 / M7) (Methanococcus vulcanius).